The primary structure comprises 133 residues: Vascular endothelial growth factor homolog (133 aa).

Positions 1-20 are cleaved as a signal peptide; it reads MKLLVGILVAVCLHQYLLNA. Disulfide bonds link Cys-36-Cys-78, Cys-67-Cys-112, and Cys-71-Cys-114. A glycan (N-linked (GlcNAc...) asparagine; by host) is linked at Asn-85.

This sequence belongs to the PDGF/VEGF growth factor family. As to quaternary structure, homodimer; disulfide-linked.

It is found in the secreted. In terms of biological role, induces endothelial proliferation. The polypeptide is Vascular endothelial growth factor homolog (Orf virus (strain NZ2) (OV NZ-2)).